The primary structure comprises 619 residues: Vitamin B12 transporter BtuB (619 aa).

Residues 1-25 form the signal peptide; that stretch reads MINKKRLLLSTVSIMVISGWNQASA. The short motif at 31–38 is the TonB box element; that stretch reads DSLVVTAS. The TBDR plug domain maps to 43 to 157; it reads PISSILAPYT…IGGVINIITT (115 aa). Cyanocob(III)alamin contacts are provided by residues L88, S90, and 115-116; that span reads IS. The TBDR beta-barrel domain occupies 160 to 619; that stretch reads KLGTSLNVGI…EYYLTGSYNF (460 aa). Transmembrane regions (beta stranded) follow at residues 163 to 170, 174 to 183, and 189 to 200; these read TSLNVGIG, YQTYDGATQQ, and TVLTAAANYTYT. Positions 204, 216, 218, and 220 each coordinate Ca(2+). 2 beta stranded membrane passes run 222-232 and 237-253; these read FMSKMLWLGVD and EQVSGFVRAYGYNNRTS. Y254 and D255 together coordinate Ca(2+). Position 256 (A256) interacts with cyanocob(III)alamin. D268 contacts Ca(2+). Beta stranded transmembrane passes span 270-284, 286-303, 316-332, 335-344, 360-376, 378-388, 392-407, 410-424, 441-450, 456-465, 478-495, 499-514, 522-534, 540-556, 563-577, 590-601, and 607-619; these read RELYSRHYDMGVRFN, GIYSSQLITSYSHTKDYN, SLNDSEQYNLQWGNTFQ, QGIVSTGVDF, KTVRNTGMYLTAQQQLK, FILEGAIRSDK, AGWNTTWQASLGWEFI, YRLIASYGTAFKAPT, ESKQWEGGIE, LTWRMTVYRN, YYNIGKAKIKGVEWTGLI, MFQHQLTIQYIDPRNS, RRAKQQVKYQLDW, DWGLTYQYLGRRYDKDF, RVKLGGVSFWDLTVS, IANLLDKDYETV, and PGREYYLTGSYNF. S316 provides a ligand contact to cyanocob(III)alamin. Residue R522 coordinates cyanocob(III)alamin. Residues 602 to 619 carry the TonB C-terminal box motif; sequence YGYRIPGREYYLTGSYNF.

It belongs to the TonB-dependent receptor family. BtuB (TC 1.B.14.3.1) subfamily.

The protein localises to the cell outer membrane. Its function is as follows. Involved in the active translocation of vitamin B12 (cyanocobalamin) across the outer membrane to the periplasmic space. It derives its energy for transport by interacting with the trans-periplasmic membrane protein TonB. The polypeptide is Vitamin B12 transporter BtuB (Photorhabdus laumondii subsp. laumondii (strain DSM 15139 / CIP 105565 / TT01) (Photorhabdus luminescens subsp. laumondii)).